The chain runs to 140 residues: Non-specific lipid transfer protein GPI-anchored 33 (140 aa).

Positions M1–A27 are cleaved as a signal peptide. Disulfide bonds link C40-C80, C52-C64, C65-C104, and C78-C112. A glycan (N-linked (GlcNAc...) asparagine) is linked at N91. G115 carries GPI-anchor amidated glycine lipidation. Residues D116–F140 constitute a propeptide, removed in mature form.

This sequence belongs to the plant LTP family.

It is found in the cell membrane. In terms of biological role, probable lipid transfer protein. The chain is Non-specific lipid transfer protein GPI-anchored 33 from Arabidopsis thaliana (Mouse-ear cress).